The following is a 201-amino-acid chain: Sorting nexin-10 (201 aa).

Residues 8-125 (EEFVSVWVRD…SLHLFLQSHL (118 aa)) form a required for interaction with ATP6V1D region. A PX domain is found at 10-127 (FVSVWVRDPR…HLFLQSHLNS (118 aa)). The a 1,2-diacyl-sn-glycero-3-phospho-(1D-myo-inositol-3-phosphate) site is built by arginine 53, lysine 79, and arginine 94. The tract at residues 156–201 (FPEEDEEGKKENDIDYDSESSSSGLGHSSDDSSSHGCKVNTAPQES) is disordered.

Belongs to the sorting nexin family. Interacts with ATP6V1D; may play a role in ciliogenesis.

It localises to the cytoplasm. Its subcellular location is the endosome membrane. It is found in the cytoskeleton. The protein localises to the microtubule organizing center. The protein resides in the centrosome. Functionally, probable phosphoinositide-binding protein involved in protein sorting and membrane trafficking in endosomes. Plays a role in cilium biogenesis through regulation of the transport and the localization of proteins to the cilium. Required for the localization to the cilium of V-ATPase subunit ATP6V1D and ATP6V0D1, and RAB8A. Involved in osteoclast differentiation and therefore bone resorption. This is Sorting nexin-10 (SNX10) from Homo sapiens (Human).